We begin with the raw amino-acid sequence, 201 residues long: LexA repressor (201 aa).

Positions 28–48 form a DNA-binding region, H-T-H motif; that stretch reads LREIAAQLGISGTLGVMKHLE. Active-site for autocatalytic cleavage activity residues include serine 120 and lysine 157.

Belongs to the peptidase S24 family. In terms of assembly, homodimer.

It carries out the reaction Hydrolysis of Ala-|-Gly bond in repressor LexA.. Its function is as follows. Represses a number of genes involved in the response to DNA damage (SOS response), including recA and lexA. In the presence of single-stranded DNA, RecA interacts with LexA causing an autocatalytic cleavage which disrupts the DNA-binding part of LexA, leading to derepression of the SOS regulon and eventually DNA repair. This Citrifermentans bemidjiense (strain ATCC BAA-1014 / DSM 16622 / JCM 12645 / Bem) (Geobacter bemidjiensis) protein is LexA repressor.